Consider the following 547-residue polypeptide: Chaperonin GroEL (547 aa).

ATP-binding positions include 30–33 (TLGP), K51, 87–91 (DGTTT), G415, and D495.

It belongs to the chaperonin (HSP60) family. As to quaternary structure, forms a cylinder of 14 subunits composed of two heptameric rings stacked back-to-back. Interacts with the co-chaperonin GroES.

Its subcellular location is the cytoplasm. The enzyme catalyses ATP + H2O + a folded polypeptide = ADP + phosphate + an unfolded polypeptide.. In terms of biological role, together with its co-chaperonin GroES, plays an essential role in assisting protein folding. The GroEL-GroES system forms a nano-cage that allows encapsulation of the non-native substrate proteins and provides a physical environment optimized to promote and accelerate protein folding. This Allorhizobium ampelinum (strain ATCC BAA-846 / DSM 112012 / S4) (Agrobacterium vitis (strain S4)) protein is Chaperonin GroEL.